A 237-amino-acid polypeptide reads, in one-letter code: Keratin-associated protein 5-5 (237 aa).

8 tandem repeats follow at residues 62–65, 68–71, 74–77, 159–162, 178–181, 188–191, 198–201, and 227–230. The segment at 62–230 is 8 X 4 AA repeats of C-C-X-P; the sequence is CCVPVCCCKP…CCCQSSCCVP (169 aa).

Belongs to the KRTAP type 5 family. Interacts with hair keratins. In terms of tissue distribution, restricted to hair root, not detected in any other tissues.

In terms of biological role, in the hair cortex, hair keratin intermediate filaments are embedded in an interfilamentous matrix, consisting of hair keratin-associated protein (KRTAP), which are essential for the formation of a rigid and resistant hair shaft through their extensive disulfide bond cross-linking with abundant cysteine residues of hair keratins. The matrix proteins include the high-sulfur and high-glycine-tyrosine keratins. The protein is Keratin-associated protein 5-5 (KRTAP5-5) of Homo sapiens (Human).